Consider the following 187-residue polypeptide: Corticoliberin (187 aa).

Positions 1–19 are cleaved as a signal peptide; sequence MRLRLLVSAGMLLVALSSC. Residues 20–144 constitute a propeptide that is removed on maturation; sequence LPCRALLSRG…HQGALERERR (125 aa). 2 disordered regions span residues 75–94 and 114–146; these read AARL…SRPS and QRSL…RRSE. Residues 117–129 show a composition bias toward basic and acidic residues; sequence LDSRAEPAERGAE. Isoleucine 185 is subject to Isoleucine amide.

It belongs to the sauvagine/corticotropin-releasing factor/urotensin I family. In terms of assembly, interacts (via C-terminus) with CRFR1 (via N-terminal extracellular domain). In terms of tissue distribution, expressed in parvocellular paraventricular nucleus of the hypothalamus and in medial accessory olivary nucleus.

Its subcellular location is the secreted. Functionally, hormone regulating the release of corticotropin from pituitary gland. Induces NLRP6 in intestinal epithelial cells, hence may influence gut microbiota profile. The chain is Corticoliberin (Crh) from Mus musculus (Mouse).